Consider the following 495-residue polypeptide: Probable leucine aminopeptidase 2 (495 aa).

An N-terminal signal peptide occupies residues 1–21 (MKSQLLSLAVAVTTISQGVVG). Positions 130 to 216 (MAELVVAKNN…SQEDGKNLAT (87 aa)) constitute a PA domain. Asn-142 and Asn-235 each carry an N-linked (GlcNAc...) asparagine glycan. 2 residues coordinate Zn(2+): His-259 and Asp-271. Asn-272 carries an N-linked (GlcNAc...) asparagine glycan. The active-site Proton acceptor is Glu-303. Residues Glu-304 and Asp-332 each coordinate Zn(2+). Asn-352 carries N-linked (GlcNAc...) asparagine glycosylation. His-430 is a Zn(2+) binding site.

It belongs to the peptidase M28 family. M28A subfamily. Monomer. Zn(2+) is required as a cofactor.

The protein localises to the secreted. Functionally, extracellular aminopeptidase that releases a wide variety of amino acids from natural peptides and contributes to pathogenicity. This Trichophyton verrucosum (strain HKI 0517) protein is Probable leucine aminopeptidase 2 (LAP2).